A 339-amino-acid polypeptide reads, in one-letter code: UDP-3-O-acylglucosamine N-acyltransferase (339 aa).

The active-site Proton acceptor is histidine 251.

This sequence belongs to the transferase hexapeptide repeat family. LpxD subfamily. In terms of assembly, homotrimer.

It carries out the reaction a UDP-3-O-[(3R)-3-hydroxyacyl]-alpha-D-glucosamine + a (3R)-hydroxyacyl-[ACP] = a UDP-2-N,3-O-bis[(3R)-3-hydroxyacyl]-alpha-D-glucosamine + holo-[ACP] + H(+). It functions in the pathway bacterial outer membrane biogenesis; LPS lipid A biosynthesis. Catalyzes the N-acylation of UDP-3-O-acylglucosamine using 3-hydroxyacyl-ACP as the acyl donor. Is involved in the biosynthesis of lipid A, a phosphorylated glycolipid that anchors the lipopolysaccharide to the outer membrane of the cell. The protein is UDP-3-O-acylglucosamine N-acyltransferase of Paramagnetospirillum magneticum (strain ATCC 700264 / AMB-1) (Magnetospirillum magneticum).